A 218-amino-acid polypeptide reads, in one-letter code: Elongation factor Ts (218 aa).

The involved in Mg(2+) ion dislocation from EF-Tu stretch occupies residues 82–85 (TDFV).

The protein belongs to the EF-Ts family.

It is found in the cytoplasm. In terms of biological role, associates with the EF-Tu.GDP complex and induces the exchange of GDP to GTP. It remains bound to the aminoacyl-tRNA.EF-Tu.GTP complex up to the GTP hydrolysis stage on the ribosome. The sequence is that of Elongation factor Ts from Prochlorococcus marinus (strain MIT 9313).